The chain runs to 367 residues: DNA replication and repair protein RecF (367 aa).

30 to 37 (GANGSGKT) is a binding site for ATP.

The protein belongs to the RecF family.

The protein localises to the cytoplasm. Its function is as follows. The RecF protein is involved in DNA metabolism; it is required for DNA replication and normal SOS inducibility. RecF binds preferentially to single-stranded, linear DNA. It also seems to bind ATP. The polypeptide is DNA replication and repair protein RecF (Pseudomonas fluorescens (strain SBW25)).